Here is a 132-residue protein sequence, read N- to C-terminus: Small ribosomal subunit protein uS8 (132 aa).

It belongs to the universal ribosomal protein uS8 family. As to quaternary structure, part of the 30S ribosomal subunit. Contacts proteins S5 and S12.

Functionally, one of the primary rRNA binding proteins, it binds directly to 16S rRNA central domain where it helps coordinate assembly of the platform of the 30S subunit. The protein is Small ribosomal subunit protein uS8 of Streptococcus pneumoniae serotype 19F (strain G54).